Here is a 1634-residue protein sequence, read N- to C-terminus: Protein TIC 214 (1634 aa).

5 helical membrane passes run 25–45 (FIIGQFIRFISIYYAPLYVAL), 53–73 (ILALPYLLIHLFWNTDKSFFA), 94–116 (HFILQLLNSCILPNSTLARLITI), 133–153 (FAWFIGQIFMLNSFELVLVWI), and 172–192 (IFVILFNCLFGSLLFILSIQC). Disordered regions lie at residues 216–242 (RERLQSEEERDVEKKKPDYKLPDSESE) and 1365–1395 (QQKSETDSETDSQQKNIAETQKYLEEDSTKS). Positions 1386–1395 (KYLEEDSTKS) are enriched in basic and acidic residues.

Belongs to the TIC214 family. As to quaternary structure, part of the Tic complex.

It localises to the plastid. Its subcellular location is the chloroplast inner membrane. Functionally, involved in protein precursor import into chloroplasts. May be part of an intermediate translocation complex acting as a protein-conducting channel at the inner envelope. The chain is Protein TIC 214 from Cuscuta exaltata (Tall dodder).